The following is a 429-amino-acid chain: MKYLSYTITFVKNTHRSCQRINKSASFGMIGSLAIGFVLMIVSFWAGTYVNVRGNPVMLDFSDGASSTRGDSNAHNNLGLTGANLLHFFKNRMSDTKDLTDARGVQVSRFYDEVVRYLTAENAGASTAEGTCFPEGSIVSKLTRNVNVVPKVHSHNDYWRDLPLFEALCHGIPSVEADVWLVDNDTQLAVGHNEAFLDHAHRTLHSLYTGPLLTMLNEVNCNLGDKDHKYGVFYSSPETTLNLYIDFKSPDSTQTYALLMDLYLKPLIDMGYLTYFDMDEEKVVWNPVTVILTGDYPTDPTVLDGQEQKGYYNTTQRFVFLDAPMHKLDEHYSGISVVASASLQQLLGNCKDLSQEADRSLLRQGSLPTESVTCVAKQVQKAQSLGLKTRIWGAPTWPESSKQKLWSQQIFDIGIDFLNTDDLEEVTHL.

Belongs to the AIM6 family.

This chain is Altered inheritance of mitochondria protein 6 (AIM6), found in Lachancea thermotolerans (strain ATCC 56472 / CBS 6340 / NRRL Y-8284) (Yeast).